The primary structure comprises 319 residues: Acetyl-coenzyme A carboxylase carboxyl transferase subunit alpha (319 aa).

The CoA carboxyltransferase C-terminal domain occupies 35 to 296; sequence DLDKEIEQLE…KATLLRQLAE (262 aa).

This sequence belongs to the AccA family. As to quaternary structure, acetyl-CoA carboxylase is a heterohexamer composed of biotin carboxyl carrier protein (AccB), biotin carboxylase (AccC) and two subunits each of ACCase subunit alpha (AccA) and ACCase subunit beta (AccD).

The protein localises to the cytoplasm. It carries out the reaction N(6)-carboxybiotinyl-L-lysyl-[protein] + acetyl-CoA = N(6)-biotinyl-L-lysyl-[protein] + malonyl-CoA. The protein operates within lipid metabolism; malonyl-CoA biosynthesis; malonyl-CoA from acetyl-CoA: step 1/1. In terms of biological role, component of the acetyl coenzyme A carboxylase (ACC) complex. First, biotin carboxylase catalyzes the carboxylation of biotin on its carrier protein (BCCP) and then the CO(2) group is transferred by the carboxyltransferase to acetyl-CoA to form malonyl-CoA. The protein is Acetyl-coenzyme A carboxylase carboxyl transferase subunit alpha of Vibrio vulnificus (strain CMCP6).